The primary structure comprises 248 residues: Probable cyclic nucleotide phosphodiesterase CBUA0032 (248 aa).

7 residues coordinate Fe cation: aspartate 13, histidine 15, aspartate 52, asparagine 82, histidine 152, histidine 191, and histidine 193. Residues histidine 15, aspartate 52, and 82 to 83 each bind AMP; that span reads NH. Histidine 193 is a binding site for AMP.

The protein belongs to the cyclic nucleotide phosphodiesterase class-III family. Fe(2+) is required as a cofactor.

In Coxiella burnetii (strain RSA 493 / Nine Mile phase I), this protein is Probable cyclic nucleotide phosphodiesterase CBUA0032.